We begin with the raw amino-acid sequence, 150 residues long: Regulatory protein RecX (150 aa).

This sequence belongs to the RecX family.

Its subcellular location is the cytoplasm. Functionally, modulates RecA activity. This Acidithiobacillus ferrooxidans (strain ATCC 23270 / DSM 14882 / CIP 104768 / NCIMB 8455) (Ferrobacillus ferrooxidans (strain ATCC 23270)) protein is Regulatory protein RecX.